We begin with the raw amino-acid sequence, 198 residues long: Small ribosomal subunit protein eS1 (198 aa).

Belongs to the eukaryotic ribosomal protein eS1 family.

This is Small ribosomal subunit protein eS1 from Methanospirillum hungatei JF-1 (strain ATCC 27890 / DSM 864 / NBRC 100397 / JF-1).